Here is a 439-residue protein sequence, read N- to C-terminus: DNA damage-inducible protein 1 (439 aa).

A Ubiquitin-like domain is found at 1-82; the sequence is MQITIAIQDT…LALHVRETQR (82 aa). Positions 82–101 are disordered; it reads RATAVPESQQGRPAAPPQQD. D220 is a catalytic residue. Positions 333 to 398 are disordered; the sequence is QDEPTIEGPG…PAPRAPQARS (66 aa). 2 stretches are compositionally biased toward low complexity: residues 364–375 and 383–398; these read GQAGPSTAAQPG and PASA…QARS. Residues 398–438 enclose the UBA domain; the sequence is SFPREHIEQLVALGADEQKAIRALEATDGNVEYAASLIFEG.

Belongs to the DDI1 family. As to quaternary structure, binds ubiquitin and polyubiquitinated proteins.

It localises to the cytoplasm. Its function is as follows. Probable aspartic protease. May be involved in the regulation of exocytosis. Acts as a linker between the 19S proteasome and polyubiquitinated proteins via UBA domain interactions with ubiquitin for their subsequent degradation. Required for S-phase checkpoint control. The sequence is that of DNA damage-inducible protein 1 (ddi-1) from Neurospora crassa (strain ATCC 24698 / 74-OR23-1A / CBS 708.71 / DSM 1257 / FGSC 987).